The chain runs to 237 residues: MTETKEEKVHKVFEKISPSYDRMNSVISFKLHVKWRKETMKLMRVQKGTNVLDVCCGTADWSIMMAEEIGPEGHVTGLDFSENMLKVGREKVTEADLHNVELIHGNAMELPFPDNSFDYVTIGFGLRNVPDYMQVLREMYRVLKPGGQLACIDTSQPNIPGWKQVFNAYFRYVMPVFGKFFAKSYKEYSWLQESTREFPGMARLAEMFQEAGFSYVRYISHSGGASATHFGFKKKEQ.

S-adenosyl-L-methionine contacts are provided by residues T58, D79, and 106-107 (NA).

Belongs to the class I-like SAM-binding methyltransferase superfamily. MenG/UbiE family.

It catalyses the reaction a 2-demethylmenaquinol + S-adenosyl-L-methionine = a menaquinol + S-adenosyl-L-homocysteine + H(+). It participates in quinol/quinone metabolism; menaquinone biosynthesis; menaquinol from 1,4-dihydroxy-2-naphthoate: step 2/2. Functionally, methyltransferase required for the conversion of demethylmenaquinol (DMKH2) to menaquinol (MKH2). The polypeptide is Demethylmenaquinone methyltransferase (Listeria monocytogenes serotype 4a (strain HCC23)).